Reading from the N-terminus, the 355-residue chain is C-C chemokine receptor type 1 (355 aa).

Residues 1 to 34 (METPNTTEDYDTTTEFDYGDATPCQKVNERAFGA) lie on the Extracellular side of the membrane. N-linked (GlcNAc...) asparagine glycosylation occurs at Asn-5. Intrachain disulfides connect Cys-24–Cys-273 and Cys-106–Cys-183. Residues 35-60 (QLLPPLYSLVFVIGLVGNILVVLVLV) traverse the membrane as a helical segment. The Cytoplasmic portion of the chain corresponds to 61–64 (QYKR). A helical membrane pass occupies residues 65–91 (LKNMTSIYLLNLAISDLLFLFTLPFWI). Residues 92–107 (DYKLKDDWVFGDAMCK) are Extracellular-facing. The chain crosses the membrane as a helical span at residues 108–129 (ILSGFYYTGLYSEIFFIILLTI). Topologically, residues 130–146 (DRYLAIVHAVFALRART) are cytoplasmic. The helical transmembrane segment at 147-171 (VTFGVITSIIIWALAILASMPGLYF) threads the bilayer. Over 172 to 197 (SKTQWEFTHHTCSLHFPHESLREWKL) the chain is Extracellular. The helical transmembrane segment at 198 to 223 (FQALKLNLFGLVLPLLVMIICYTGII) threads the bilayer. Topologically, residues 224-239 (KILLRRPNEKKSKAVR) are cytoplasmic. A helical transmembrane segment spans residues 240 to 264 (LIFVIMIIFFLFWTPYNLTILISVF). The Extracellular portion of the chain corresponds to 265-281 (QDFLFTHECEQSRHLDL). The chain crosses the membrane as a helical span at residues 282–305 (AVQVTEVIAYTHCCVNPVIYAFVG). Topologically, residues 306–355 (ERFRKYLRQLFHRRVAVHLVKWLPFLSVDRLERVSSTSPSTGEHELSAGF) are cytoplasmic.

This sequence belongs to the G-protein coupled receptor 1 family. As to quaternary structure, interacts with CREB3. Interacts with CCL3. Interacts with CCL15. Interacts with CCL23. Interacts with GNAI1. Interacts with PF4/CXCL4. As to expression, widely expressed in different hematopoietic cells.

It is found in the cell membrane. Chemokine receptor that plays a crucial role in regulating immune cell migration, inflammation, and immune responses. Contributes to the inflammatory response by recruiting immune cells, such as monocytes, macrophages, T-cells, and dendritic cells, to sites of inflammation for the clearance of pathogens and the resolution of tissue damage. When activated by its ligands including CCL3, CCL5-9, CCL13-16 and CCL23, triggers a signaling cascade within immune cells, leading to their migration towards the source of the chemokine. For example, mediates neutrophil migration after activation by CCL3 leading to the sequential release of TNF-alpha and leukotriene B4. Also mediates monocyte migration upon CXCL4 binding. Activation by CCL5 results in neuroinflammation through the ERK1/2 signaling pathway. This Homo sapiens (Human) protein is C-C chemokine receptor type 1 (CCR1).